We begin with the raw amino-acid sequence, 161 residues long: Probable K(+)/H(+) antiporter subunit E (161 aa).

2 helical membrane passes run 4 to 21 (WFPY…WLLL) and 28 to 50 (GSIV…LQPA).

Belongs to the CPA3 antiporters (TC 2.A.63) subunit E family. In terms of assembly, may form a hetero-oligomeric complex that consists of six subunits: PhaAB, PhaC, PhaD, PhaE, PhaF and PhaG.

The protein resides in the cell membrane. Part of a K(+) efflux system which is required for the adaptation of R.meliloti to alkaline pH as well as for the infection process during symbiotic nodule development. This chain is Probable K(+)/H(+) antiporter subunit E (phaE), found in Rhizobium meliloti (strain 1021) (Ensifer meliloti).